The sequence spans 121 residues: Dihydroneopterin aldolase (121 aa).

Glu-16 and Met-111 together coordinate substrate.

Belongs to the archaeal dihydroneopterin aldolase family. In terms of assembly, homotetramer.

It carries out the reaction 7,8-dihydroneopterin = 6-hydroxymethyl-7,8-dihydropterin + glycolaldehyde. Its pathway is cofactor biosynthesis; 5,6,7,8-tetrahydromethanopterin biosynthesis. Functionally, catalyzes the conversion of 7,8-dihydroneopterin (H2Neo) to 6-hydroxymethyl-7,8-dihydropterin (6-HMD). The sequence is that of Dihydroneopterin aldolase from Methanopyrus kandleri (strain AV19 / DSM 6324 / JCM 9639 / NBRC 100938).